The following is a 383-amino-acid chain: Delta(12)-fatty-acid desaturase FAD2 (383 aa).

Transmembrane regions (helical) follow at residues 56 to 76 and 84 to 104; these read VVYD…YFHL and VAWP…WVIA. A Histidine box-1 motif is present at residues 105–109; it reads HECGH. The helical transmembrane segment at 117–137 threads the bilayer; it reads LLDDIVGLVLHSCLLVPYFSW. A Histidine box-2 motif is present at residues 141–145; the sequence is HRRHH. Helical transmembrane passes span 179–199, 225–245, and 249–269; these read LFTL…FNVS, IYIS…LAAA, and AWVI…LVMI. The Histidine box-3 motif lies at 315–319; the sequence is HVAHH.

The protein belongs to the fatty acid desaturase type 1 family. Expressed in leaves and seeds.

The protein localises to the endoplasmic reticulum membrane. It carries out the reaction (9Z)-octadecenoyl-CoA + 2 Fe(II)-[cytochrome b5] + O2 + 2 H(+) = (9Z,12Z)-octadecadienoyl-CoA + 2 Fe(III)-[cytochrome b5] + 2 H2O. It catalyses the reaction (9Z)-hexadecenoyl-CoA + 2 Fe(II)-[cytochrome b5] + O2 + 2 H(+) = (9Z,12Z)-hexadecadienoyl-CoA + 2 Fe(III)-[cytochrome b5] + 2 H2O. It functions in the pathway lipid metabolism; polyunsaturated fatty acid biosynthesis. Catalyzes the desaturation of oleic acid (18:1(9Z)) to linoleic acid (18:2(9Z,12Z)). In Vernicia fordii (Tung), this protein is Delta(12)-fatty-acid desaturase FAD2.